A 1009-amino-acid chain; its full sequence is Probable beta-galactosidase B (1009 aa).

The first 27 residues, 1–27, serve as a signal peptide directing secretion; the sequence is MKTIAGLSWISALSSLASLPNGLGVSA. Tyr-96 serves as a coordination point for substrate. N-linked (GlcNAc...) asparagine glycosylation occurs at Asn-106. Positions 141, 142, 143, and 201 each coordinate substrate. Residue Glu-202 is the Proton donor of the active site. A substrate-binding site is contributed by Tyr-271. Cysteines 277 and 330 form a disulfide. Residue Glu-314 is the Nucleophile of the active site. Tyr-379 is a binding site for substrate. Asn-467, Asn-495, Asn-547, Asn-593, Asn-632, Asn-672, Asn-707, Asn-775, Asn-782, Asn-789, Asn-795, and Asn-914 each carry an N-linked (GlcNAc...) asparagine glycan.

Belongs to the glycosyl hydrolase 35 family.

It is found in the secreted. It carries out the reaction Hydrolysis of terminal non-reducing beta-D-galactose residues in beta-D-galactosides.. Cleaves beta-linked terminal galactosyl residues from gangliosides, glycoproteins, and glycosaminoglycans. In Pyrenophora tritici-repentis (strain Pt-1C-BFP) (Wheat tan spot fungus), this protein is Probable beta-galactosidase B (lacB).